We begin with the raw amino-acid sequence, 118 residues long: Large ribosomal subunit protein bL20 (118 aa).

The protein belongs to the bacterial ribosomal protein bL20 family.

Functionally, binds directly to 23S ribosomal RNA and is necessary for the in vitro assembly process of the 50S ribosomal subunit. It is not involved in the protein synthesizing functions of that subunit. In Enterobacter sp. (strain 638), this protein is Large ribosomal subunit protein bL20.